The primary structure comprises 256 residues: Type II phosphatidylinositol 4,5-bisphosphate 4-phosphatase (256 aa).

The segment covering 1 to 10 (MAADGIDERS) has biased composition (basic and acidic residues). A disordered region spans residues 1–25 (MAADGIDERSPLISPSSGNVTPTAP). Over residues 13–22 (ISPSSGNVTP) the composition is skewed to polar residues. Residue cysteine 106 is part of the active site. A CX5R motif motif is present at residues 106-112 (CKDISRR). The next 2 membrane-spanning stretches (helical) occupy residues 191 to 211 (CCTYITMGMICIFIGVGLTVG) and 226 to 246 (WAVAYLVGLVCLVRACYWGAI).

It is found in the late endosome membrane. It localises to the lysosome membrane. It carries out the reaction a 1,2-diacyl-sn-glycero-3-phospho-(1D-myo-inositol-4,5-bisphosphate) + H2O = a 1,2-diacyl-sn-glycero-3-phospho-(1D-myo-inositol-5-phosphate) + phosphate. Catalyzes the hydrolysis of phosphatidylinositol-4,5-bisphosphate (PtdIns-4,5-P2) to phosphatidylinositol-4-phosphate (PtdIns-4-P). In Xenopus laevis (African clawed frog), this protein is Type II phosphatidylinositol 4,5-bisphosphate 4-phosphatase.